We begin with the raw amino-acid sequence, 214 residues long: NADH-quinone oxidoreductase subunit C (214 aa).

The protein belongs to the complex I 30 kDa subunit family. In terms of assembly, NDH-1 is composed of 14 different subunits. Subunits NuoB, C, D, E, F, and G constitute the peripheral sector of the complex.

It localises to the cell inner membrane. It catalyses the reaction a quinone + NADH + 5 H(+)(in) = a quinol + NAD(+) + 4 H(+)(out). Functionally, NDH-1 shuttles electrons from NADH, via FMN and iron-sulfur (Fe-S) centers, to quinones in the respiratory chain. The immediate electron acceptor for the enzyme in this species is believed to be ubiquinone. Couples the redox reaction to proton translocation (for every two electrons transferred, four hydrogen ions are translocated across the cytoplasmic membrane), and thus conserves the redox energy in a proton gradient. This chain is NADH-quinone oxidoreductase subunit C, found in Caulobacter sp. (strain K31).